Here is a 132-residue protein sequence, read N- to C-terminus: Ribonuclease P protein component (132 aa).

This sequence belongs to the RnpA family. In terms of assembly, consists of a catalytic RNA component (M1 or rnpB) and a protein subunit.

The catalysed reaction is Endonucleolytic cleavage of RNA, removing 5'-extranucleotides from tRNA precursor.. RNaseP catalyzes the removal of the 5'-leader sequence from pre-tRNA to produce the mature 5'-terminus. It can also cleave other RNA substrates such as 4.5S RNA. The protein component plays an auxiliary but essential role in vivo by binding to the 5'-leader sequence and broadening the substrate specificity of the ribozyme. The polypeptide is Ribonuclease P protein component (Micrococcus luteus (strain ATCC 4698 / DSM 20030 / JCM 1464 / CCM 169 / CCUG 5858 / IAM 1056 / NBRC 3333 / NCIMB 9278 / NCTC 2665 / VKM Ac-2230) (Micrococcus lysodeikticus)).